The sequence spans 267 residues: 2-keto-3-deoxy-L-rhamnonate aldolase (267 aa).

Histidine 49 (proton acceptor) is an active-site residue. Position 151 (glutamine 151) interacts with substrate. Glutamate 153 provides a ligand contact to Mg(2+). Substrate is bound by residues alanine 178 and aspartate 179. Aspartate 179 is a binding site for Mg(2+).

Belongs to the HpcH/HpaI aldolase family. KDR aldolase subfamily. As to quaternary structure, homohexamer. The cofactor is Mg(2+).

The enzyme catalyses 2-dehydro-3-deoxy-L-rhamnonate = (S)-lactaldehyde + pyruvate. In terms of biological role, catalyzes the reversible retro-aldol cleavage of 2-keto-3-deoxy-L-rhamnonate (KDR) to pyruvate and lactaldehyde. The protein is 2-keto-3-deoxy-L-rhamnonate aldolase of Salmonella agona (strain SL483).